The chain runs to 1120 residues: Vacuolar cation-chloride cotransporter 1 (1120 aa).

The segment at 1–21 (MVSRFYQIPGTHRPSSAISSS) is disordered. The Cytoplasmic portion of the chain corresponds to 1 to 62 (MVSRFYQIPG…YDPDNPNKDK (62 aa)). Serine 34 is modified (phosphoserine). A helical transmembrane segment spans residues 63 to 83 (LGTYDGVFVPTALNVLSILMF). At 84–85 (LR) the chain is on the vacuolar side. A helical membrane pass occupies residues 86 to 106 (FGFILGQLGIICTIGLLLLSY). At 107–145 (TINLLTTLSISAISTNGTVRGGGAYYMISRSLGPEFGGS) the chain is on the cytoplasmic side. A helical transmembrane segment spans residues 146–166 (IGLVFFLGQVFNAGMNAVGII). Over 167 to 193 (EPLLYNLGYSAQGEPPAALGELLPRGH) the chain is Vacuolar. Residues 194–214 (WHEFTYATVILFLCFSVAFVG) form a helical membrane-spanning segment. Residues 215–221 (SQTVSRA) lie on the Cytoplasmic side of the membrane. A helical membrane pass occupies residues 222–242 (GNILFLVLAASIFSIPLSALI). Residues 243-283 (RSPFTEGGISYTGPSWQTFHDNLLPHLTKGAAGSLLKGKET) lie on the Vacuolar side of the membrane. Residues 284–304 (FNDLFGVFFPATAGIFAGAGM) traverse the membrane as a helical segment. Residues 305–317 (SSELRKPSKSIPK) are Cytoplasmic-facing. The helical transmembrane segment at 318 to 338 (GTLWGLLFTFICYAVVVFSMG) threads the bilayer. The Vacuolar portion of the chain corresponds to 339–360 (CSIPRRSLYDEVQIIQTISSVQ). The helical transmembrane segment at 361 to 381 (WVIFMGEMATSLFSIIVGMLG) threads the bilayer. The Cytoplasmic portion of the chain corresponds to 382–393 (AAYVLEAIAKDN). A helical transmembrane segment spans residues 394–414 (IIPGLEIFAHSPLYSLIFTWI). At 415 to 430 (LTQLCLFSDVNKIATF) the chain is on the vacuolar side. Residues 431–451 (ITMTFLMTFVVMNLACFLLGI) traverse the membrane as a helical segment. The Cytoplasmic segment spans residues 452-462 (SSAPNFRPSFK). Residues 463–482 (YFNRYTTAIGALLSVVAMLI) traverse the membrane as a helical segment. Topologically, residues 483–487 (VDGIS) are vacuolar. A helical transmembrane segment spans residues 488–506 (ASVLFLAMILLFLFIHYFS). Over 507-1120 (PPKSWGDVSQ…SQTMTVTTAL (614 aa)) the chain is Cytoplasmic. Phosphoserine is present on residues serine 654, serine 915, and serine 918.

This sequence belongs to the SLC12A transporter family.

It localises to the vacuole membrane. In terms of biological role, catalyzes the coordinated symport of chloride with potassium ions across the vacuolar membrane. Involved in vacuolar osmoregulation. The polypeptide is Vacuolar cation-chloride cotransporter 1 (Saccharomyces cerevisiae (strain ATCC 204508 / S288c) (Baker's yeast)).